Reading from the N-terminus, the 426-residue chain is Ammonium transporter Rh type A (426 aa).

Residues 1–4 lie on the Cytoplasmic side of the membrane; the sequence is MRFK. The chain crosses the membrane as a helical span at residues 5-25; sequence FPLMAIGLEVVMIVLFALFVQ. The Extracellular segment spans residues 26-54; the sequence is YETSVNTSRNPNETESAAMDVEKTMESYP. Asparagine 31 and asparagine 37 each carry an N-linked (GlcNAc...) asparagine glycan. Residues 55–75 form a helical membrane-spanning segment; sequence FFQDVHIMVFAGFGFLMTFLW. Topologically, residues 76–78 are cytoplasmic; the sequence is KYG. A helical membrane pass occupies residues 79–99; sequence FSGVGINLLIAALGLQWGTII. At 100–124 the chain is on the extracellular side; the sequence is QGIFRSHGQKFLIEMKNMIHADFST. Helical transmembrane passes span 125–145 and 146–166; these read VTVL…QMLI and MTIL…KILW. The Extracellular segment spans residues 167–170; that stretch reads ASDT. A helical membrane pass occupies residues 171–191; sequence GESMTIHAFGAYFGLAVAGIL. The Cytoplasmic segment spans residues 192–210; sequence YRSGLKEKHSNEESVYHSD. Residues 211–231 form a helical membrane-spanning segment; sequence LFAMIGSLFLWIFWPSFNSAT. The Extracellular portion of the chain corresponds to 232 to 241; that stretch reads ADEAKKQYRA. Residues 242 to 262 form a helical membrane-spanning segment; the sequence is IVNTYFSLAASVVTAYACSSL. Residues 263 to 270 are Cytoplasmic-facing; the sequence is LESRGKLN. A helical membrane pass occupies residues 271–288; that stretch reads MVHIQNATLAGGVAVGTC. Residues 289–292 lie on the Extracellular side of the membrane; it reads ADME. Residues 293-313 form a helical membrane-spanning segment; sequence IPPYYAMIIGSIAGAVSVFGF. The Cytoplasmic portion of the chain corresponds to 314–331; sequence KFLTPLFTTKLRIHDTCG. A helical transmembrane segment spans residues 332–352; that stretch reads VHNLHGLPGVIGGLAGIITVA. Topologically, residues 353–371 are extracellular; it reads LEESDSTKTVSQAAALGSS. A helical membrane pass occupies residues 372-392; it reads IATALVGGLITGAILKIPFWA. At 393–426 the chain is on the cytoplasmic side; it reads QPPDEDCYDDSVYWEVPERKEYDNHFHELLSTLH.

This sequence belongs to the ammonium transporter (TC 2.A.49) family. Rh subfamily. In terms of assembly, homodimer. Heterotrimer; a RHCE monomer interacts with a RHAG homodimer. Component of the ankyrin-1 complex in the erythrocyte, composed of ANK1, RHCE, RHAG, SLC4A1, EPB42, GYPA, GYPB and AQP1. Interacts with GYPB (via the N-terminal); this interaction bridges the (RHAG)2(RHCE) heterotrimer with the SLC4A1 Band 3 I dimer complexed with GYPA. Glycosylated.

The protein resides in the membrane. The enzyme catalyses methylamine(out) = methylamine(in). The catalysed reaction is NH4(+)(in) = NH4(+)(out). It carries out the reaction CO2(out) = CO2(in). In terms of biological role, component of the ankyrin-1 complex, a multiprotein complex involved in the stability and shape of the erythrocyte membrane. Heterotrimer with RHCE (RHAG)2(RHCE), that transports ammonium and its related derivative methylammonium, in both neutral and ionic forms, across the erythrocyte membrane. The transport of NH4(+) is electrogenic and masks the NH3 transport. Also, may act as a CO2 channel. Moreover in erythrocyte, regulates RHD membrane expression and is associated with rhesus blood group antigen expression. The polypeptide is Ammonium transporter Rh type A (Bos taurus (Bovine)).